The sequence spans 417 residues: MSKLILAVNAGSSSLKFQLIKMPEEKLVTKGVIERIGLSDSIFTIHVNGEKLTDIRDIHNHEEAVNIMLDSFKEHEMIKDITDIQGTGHRVVHGGETFPKSVVVTDEVESQIEELSELAPLHNPANLMGIRAFRKLLPEIPHVAVFDTSFHQTMPEQAYLYSLPYHYYEDYGIRKYGFHGTSHKYVSRRAAQIVGRPIEDLRIISCHIGNGASIAAIDGGESIDTSMGFTPLAGVTMGTRSGNLDPALIPFIMEKTGKTADEVLEILNKESGLLGLTGTSSDLRDLTEEAKHGRQRSRVALDLFASKIHKYIGSYAARMHGVDVIVFTAGIGENSHIIRGKVLEGLEFMGVYWDPKKNESLHGEEGYINYPHSPVKVLVVPTDEEVMISRDVIKYGKLNDNTPKKEEFDTNESIEVN.

Asparagine 9 provides a ligand contact to Mg(2+). Lysine 16 provides a ligand contact to ATP. Substrate is bound at residue arginine 90. Aspartate 147 (proton donor/acceptor) is an active-site residue. ATP-binding positions include 207 to 211 (HIGNG), 282 to 284 (DLR), and 330 to 334 (GIGEN). Glutamate 384 is a Mg(2+) binding site.

It belongs to the acetokinase family. As to quaternary structure, homodimer. Mg(2+) is required as a cofactor. The cofactor is Mn(2+).

The protein localises to the cytoplasm. It catalyses the reaction acetate + ATP = acetyl phosphate + ADP. It functions in the pathway metabolic intermediate biosynthesis; acetyl-CoA biosynthesis; acetyl-CoA from acetate: step 1/2. Its function is as follows. Catalyzes the formation of acetyl phosphate from acetate and ATP. Can also catalyze the reverse reaction. The sequence is that of Acetate kinase from Staphylococcus epidermidis (strain ATCC 35984 / DSM 28319 / BCRC 17069 / CCUG 31568 / BM 3577 / RP62A).